A 212-amino-acid chain; its full sequence is Maleylacetoacetate isomerase (212 aa).

Positions 1 to 83 constitute a GST N-terminal domain; that stretch reads MKLYTYYRST…YLEERYPQPA (83 aa). In terms of domain architecture, GST C-terminal spans 88 to 211; sequence DPLRRARERG…HPANQPDTPA (124 aa).

It belongs to the GST superfamily. Zeta family.

It carries out the reaction 4-maleylacetoacetate = 4-fumarylacetoacetate. It participates in amino-acid degradation; L-phenylalanine degradation; acetoacetate and fumarate from L-phenylalanine: step 5/6. This chain is Maleylacetoacetate isomerase (maiA), found in Pseudomonas aeruginosa (strain ATCC 15692 / DSM 22644 / CIP 104116 / JCM 14847 / LMG 12228 / 1C / PRS 101 / PAO1).